A 444-amino-acid polypeptide reads, in one-letter code: N-succinylarginine dihydrolase (444 aa).

Residues 19 to 28 (AGLSFGNVAS), Asn110, and 137 to 138 (HR) each bind substrate. Glu174 is an active-site residue. Arg214 provides a ligand contact to substrate. Residue His250 is part of the active site. Substrate-binding residues include Asp252 and Asn362. The Nucleophile role is filled by Cys368.

It belongs to the succinylarginine dihydrolase family. As to quaternary structure, homodimer.

The enzyme catalyses N(2)-succinyl-L-arginine + 2 H2O + 2 H(+) = N(2)-succinyl-L-ornithine + 2 NH4(+) + CO2. The protein operates within amino-acid degradation; L-arginine degradation via AST pathway; L-glutamate and succinate from L-arginine: step 2/5. Functionally, catalyzes the hydrolysis of N(2)-succinylarginine into N(2)-succinylornithine, ammonia and CO(2). The chain is N-succinylarginine dihydrolase from Shewanella frigidimarina (strain NCIMB 400).